The following is a 325-amino-acid chain: D-alanine--D-alanine ligase (325 aa).

The 199-residue stretch at 102 to 300 (KQIFRAAGIP…FTELVERMLQ (199 aa)) folds into the ATP-grasp domain. Position 130–185 (130–185 (AAELGSPLVIKPSNNGSTVGISIVRDERSFAQGLELARSVSSRIFLERYVPGKEIT)) interacts with ATP. 3 residues coordinate Mg(2+): D254, E267, and N269.

The protein belongs to the D-alanine--D-alanine ligase family. Mg(2+) serves as cofactor. Requires Mn(2+) as cofactor.

Its subcellular location is the cytoplasm. The catalysed reaction is 2 D-alanine + ATP = D-alanyl-D-alanine + ADP + phosphate + H(+). The protein operates within cell wall biogenesis; peptidoglycan biosynthesis. Functionally, cell wall formation. The chain is D-alanine--D-alanine ligase from Synechococcus sp. (strain JA-2-3B'a(2-13)) (Cyanobacteria bacterium Yellowstone B-Prime).